The primary structure comprises 229 residues: Ribonuclease 3 (229 aa).

Residues 5-127 (LARLERKLGY…LIGAIYLDAD (123 aa)) enclose the RNase III domain. Residue E40 coordinates Mg(2+). Residue D44 is part of the active site. Mg(2+) is bound by residues D113 and E116. E116 is an active-site residue. The DRBM domain occupies 154 to 224 (DPKTRLQEFL…AAAALIALGV (71 aa)).

It belongs to the ribonuclease III family. In terms of assembly, homodimer. The cofactor is Mg(2+).

The protein localises to the cytoplasm. It carries out the reaction Endonucleolytic cleavage to 5'-phosphomonoester.. In terms of biological role, digests double-stranded RNA. Involved in the processing of primary rRNA transcript to yield the immediate precursors to the large and small rRNAs (23S and 16S). Processes some mRNAs, and tRNAs when they are encoded in the rRNA operon. Processes pre-crRNA and tracrRNA of type II CRISPR loci if present in the organism. The polypeptide is Ribonuclease 3 (Pseudomonas putida (strain W619)).